Reading from the N-terminus, the 197-residue chain is Holliday junction branch migration complex subunit RuvA (197 aa).

The segment at 1–64 is domain I; sequence MIDSIVGTIQ…LSELECYGFL (64 aa). Residues 65–143 form a domain II region; sequence TREERELFLK…KEFKVASTSG (79 aa). Positions 144-152 are flexible linker; sequence TEEKTYEKL. Residues 152-197 are domain III; the sequence is LEEISLALLSLGYEIDEINQVLSSEDFSELSLEDGIKLALKKLSKI.

It belongs to the RuvA family. As to quaternary structure, homotetramer. Forms an RuvA(8)-RuvB(12)-Holliday junction (HJ) complex. HJ DNA is sandwiched between 2 RuvA tetramers; dsDNA enters through RuvA and exits via RuvB. An RuvB hexamer assembles on each DNA strand where it exits the tetramer. Each RuvB hexamer is contacted by two RuvA subunits (via domain III) on 2 adjacent RuvB subunits; this complex drives branch migration. In the full resolvosome a probable DNA-RuvA(4)-RuvB(12)-RuvC(2) complex forms which resolves the HJ.

Its subcellular location is the cytoplasm. Functionally, the RuvA-RuvB-RuvC complex processes Holliday junction (HJ) DNA during genetic recombination and DNA repair, while the RuvA-RuvB complex plays an important role in the rescue of blocked DNA replication forks via replication fork reversal (RFR). RuvA specifically binds to HJ cruciform DNA, conferring on it an open structure. The RuvB hexamer acts as an ATP-dependent pump, pulling dsDNA into and through the RuvAB complex. HJ branch migration allows RuvC to scan DNA until it finds its consensus sequence, where it cleaves and resolves the cruciform DNA. This Caldicellulosiruptor saccharolyticus (strain ATCC 43494 / DSM 8903 / Tp8T 6331) protein is Holliday junction branch migration complex subunit RuvA.